The following is a 205-amino-acid chain: Non-structural protein NS3 (205 aa).

Residues 177-205 are disordered; that stretch reads GTRSPETGCRKVTSGLPHGASGGSGTRQG. Residues 196 to 205 show a composition bias toward gly residues; the sequence is ASGGSGTRQG.

This sequence belongs to the orbivirus NS3 family.

Functionally, may play a role in the release of virions from infected cells. The protein is Non-structural protein NS3 (Segment-10) of Broadhaven virus (BRD).